Here is a 37-residue protein sequence, read N- to C-terminus: Large ribosomal subunit protein bL36 (37 aa).

This sequence belongs to the bacterial ribosomal protein bL36 family.

This is Large ribosomal subunit protein bL36 from Persephonella marina (strain DSM 14350 / EX-H1).